Here is a 468-residue protein sequence, read N- to C-terminus: 3-isopropylmalate dehydratase large subunit (468 aa).

Residues C347, C408, and C411 each contribute to the [4Fe-4S] cluster site.

Belongs to the aconitase/IPM isomerase family. LeuC type 1 subfamily. In terms of assembly, heterodimer of LeuC and LeuD. [4Fe-4S] cluster serves as cofactor.

It carries out the reaction (2R,3S)-3-isopropylmalate = (2S)-2-isopropylmalate. Its pathway is amino-acid biosynthesis; L-leucine biosynthesis; L-leucine from 3-methyl-2-oxobutanoate: step 2/4. Functionally, catalyzes the isomerization between 2-isopropylmalate and 3-isopropylmalate, via the formation of 2-isopropylmaleate. In Methylobacillus flagellatus (strain ATCC 51484 / DSM 6875 / VKM B-1610 / KT), this protein is 3-isopropylmalate dehydratase large subunit.